The sequence spans 547 residues: Germacrene A synthase (547 aa).

Aspartate 300, aspartate 304, aspartate 443, and glutamate 451 together coordinate Mg(2+). Positions 300-304 match the DDXXD motif motif; the sequence is DDTYD.

The protein belongs to the terpene synthase family. Tpsa subfamily. The cofactor is Mg(2+). It depends on Mn(2+) as a cofactor. Expressed in leaves.

It localises to the plastid. Its subcellular location is the chloroplast. The enzyme catalyses (2E,6E)-farnesyl diphosphate = germacrene A + diphosphate. It carries out the reaction (2E,6E)-farnesyl diphosphate = (1S,2S,4R)-beta-elemene + diphosphate. The protein operates within secondary metabolite biosynthesis; terpenoid biosynthesis. Sesquiterpene synthase involved in the biosynthesis of volatile compounds widely used in aromatherapy and folk medicine, and present in culinary herbs. Mediates the conversion of (2E,6E)-farnesyl diphosphate (FPP) into germacrene A and beta-elemene. Not able to use (2E)-geranyl diphosphate (GPP) as substrate. The polypeptide is Germacrene A synthase (Lavandula pedunculata subsp. lusitanica (French lavender)).